The sequence spans 265 residues: 3-methyl-2-oxobutanoate hydroxymethyltransferase (265 aa).

Positions 41 and 80 each coordinate Mg(2+). Residues 41–42 (DS), Asp-80, and Lys-110 each bind 3-methyl-2-oxobutanoate. Glu-112 contributes to the Mg(2+) binding site. Glu-179 serves as the catalytic Proton acceptor.

The protein belongs to the PanB family. As to quaternary structure, homodecamer; pentamer of dimers. The cofactor is Mg(2+).

The protein localises to the cytoplasm. The enzyme catalyses 3-methyl-2-oxobutanoate + (6R)-5,10-methylene-5,6,7,8-tetrahydrofolate + H2O = 2-dehydropantoate + (6S)-5,6,7,8-tetrahydrofolate. The protein operates within cofactor biosynthesis; (R)-pantothenate biosynthesis; (R)-pantoate from 3-methyl-2-oxobutanoate: step 1/2. Catalyzes the reversible reaction in which hydroxymethyl group from 5,10-methylenetetrahydrofolate is transferred onto alpha-ketoisovalerate to form ketopantoate. The protein is 3-methyl-2-oxobutanoate hydroxymethyltransferase of Pseudothermotoga lettingae (strain ATCC BAA-301 / DSM 14385 / NBRC 107922 / TMO) (Thermotoga lettingae).